The following is a 1373-amino-acid chain: DNA-directed RNA polymerase subunit beta (1373 aa).

This sequence belongs to the RNA polymerase beta chain family. As to quaternary structure, the RNAP catalytic core consists of 2 alpha, 1 beta, 1 beta' and 1 omega subunit. When a sigma factor is associated with the core the holoenzyme is formed, which can initiate transcription.

It carries out the reaction RNA(n) + a ribonucleoside 5'-triphosphate = RNA(n+1) + diphosphate. Its function is as follows. DNA-dependent RNA polymerase catalyzes the transcription of DNA into RNA using the four ribonucleoside triphosphates as substrates. This chain is DNA-directed RNA polymerase subunit beta, found in Rickettsia rickettsii (strain Iowa).